The sequence spans 801 residues: Bromodomain-containing protein 2 (801 aa).

Residue M1 is modified to N-acetylmethionine. T6 carries the phosphothreonine modification. S37 bears the Phosphoserine mark. Residues 53–73 (ALQLTPANPPPPEVSNPKKPG) form a disordered region. In terms of domain architecture, Bromo 1 spans 74-180 (RVTNQLQYLH…KIFLQKVASM (107 aa)). A protein-binding residues include D112, Y155, N156, K157, D160, and D161. 3 disordered regions span residues 268 to 349 (PPAQ…LSEQ), 456 to 647 (EPLE…YDEK), and 737 to 801 (EKRL…SDSG). Positions 285 to 298 (TTTPTPTAILAPGS) are enriched in low complexity. Phosphoserine is present on residues S298, S301, and S305. Residues 316–332 (MRRESGRPIKPPRKDLP) are compositionally biased toward basic and acidic residues. The 110-residue stretch at 344-453 (GKLSEQLKHC…DVFEFRYAKM (110 aa)) folds into the Bromo 2 domain. Residues 481-514 (SSEESSSESSSEEEEEEDEEDEEEEESESSDSEE) are compositionally biased toward acidic residues. Over residues 544–566 (KPKRKREKKEKKKKRKAEKHRGR) the composition is skewed to basic residues. Residues 555-559 (KKKRK) carry the Nuclear localization signal motif. A compositionally biased stretch (gly residues) spans 592–612 (GSGGGSAALGPSGFGPSGGSG). An NET domain is found at 632–714 (DSEEEEESRP…SCLRKKPRKP (83 aa)). Residue S633 is modified to Phosphoserine. Positions 763–795 (SSSAQQVAVSRLSASSSSSDSSSSSSSSSSSDT) are enriched in low complexity.

Belongs to the BET family. Homodimer. Interacts with E2F1. Interacts with (acetylated) STAT3; promoting STAT3 recruitment to chromatin. Interacts with CTCF; promoting BRD2 recruitment to chromatin. In terms of assembly, (Microbial infection) Interacts with herpes virus 8 protein LANA1.

It is found in the nucleus. The protein localises to the chromosome. With respect to regulation, inhibited by JQ1, a thieno-triazolo-1,4-diazepine derivative, which specifically inhibits members of the BET family (BRD2, BRD3 and BRD4). The first bromo domain is inhibited by GSK778 (iBET-BD1), which specifically inhibits the first bromo domain of members of the BET family (BRD2, BRD3 and BRD4). The second bromo domain is inhibited by ABBV-744, which specifically inhibits the second bromo domain of members of the BET family (BRD2, BRD3 and BRD4). The second bromo domain is inhibited by GSK046 (iBET-BD2), which specifically inhibits the second bromo domain of members of the BET family (BRD2, BRD3 and BRD4). Functionally, chromatin reader protein that specifically recognizes and binds histone H4 acetylated at 'Lys-5' and 'Lys-12' (H4K5ac and H4K12ac, respectively), thereby controlling gene expression and remodeling chromatin structures. Recruits transcription factors and coactivators to target gene sites, and activates RNA polymerase II machinery for transcriptional elongation. Plays a key role in genome compartmentalization via its association with CTCF and cohesin: recruited to chromatin by CTCF and promotes formation of topologically associating domains (TADs) via its ability to bind acetylated histones, contributing to CTCF boundary formation and enhancer insulation. Also recognizes and binds acetylated non-histone proteins, such as STAT3. Involved in inflammatory response by regulating differentiation of naive CD4(+) T-cells into T-helper Th17: recognizes and binds STAT3 acetylated at 'Lys-87', promoting STAT3 recruitment to chromatin. In addition to acetylated lysines, also recognizes and binds lysine residues on histones that are both methylated and acetylated on the same side chain to form N6-acetyl-N6-methyllysine (Kacme), an epigenetic mark of active chromatin associated with increased transcriptional initiation. Specifically binds histone H4 acetyl-methylated at 'Lys-5' and 'Lys-12' (H4K5acme and H4K12acme, respectively). The protein is Bromodomain-containing protein 2 of Homo sapiens (Human).